The sequence spans 352 residues: MTLLTEALSKICPVDAELMAQAQARLDNKTKPIGSLGRLEEFARRMVAITGSVAPDTKKKVVFTFAGDHGVTDEGVSAFPREVTPQMVYNFLRGGAGINVLARHVGAQVRVVDIGVDHDFGDTPGLIVRKVARGTRNFARGPAMTREEAVAALEVGIDLANEAKREGIALVGTGEMGIGNTTPSAAIIAAFSGLPVPAVTHRGTGIGDEALANKVRVIEAGLALNQPDPKDPIDVLAKVGGLEIAGIAGLILGCAANRLPVVVDGFISTAGALVACELNPHVRDYLFAAHQSVEVGHRVMLDRIGAAPILDLQLRLGEGTGGALAMGLIEAGVRILTEMATFEEAGVAEGDY.

Glu318 serves as the catalytic Proton acceptor.

This sequence belongs to the CobT family.

The enzyme catalyses 5,6-dimethylbenzimidazole + nicotinate beta-D-ribonucleotide = alpha-ribazole 5'-phosphate + nicotinate + H(+). It participates in nucleoside biosynthesis; alpha-ribazole biosynthesis; alpha-ribazole from 5,6-dimethylbenzimidazole: step 1/2. Its function is as follows. Catalyzes the synthesis of alpha-ribazole-5'-phosphate from nicotinate mononucleotide (NAMN) and 5,6-dimethylbenzimidazole (DMB). The sequence is that of Nicotinate-nucleotide--dimethylbenzimidazole phosphoribosyltransferase from Geobacter sulfurreducens (strain ATCC 51573 / DSM 12127 / PCA).